We begin with the raw amino-acid sequence, 305 residues long: Phosphatidate cytidylyltransferase (305 aa).

8 helical membrane-spanning segments follow: residues 27 to 47 (FLVI…VGLL), 67 to 87 (FPFS…ALTC), 96 to 116 (FPEH…IRLV), 124 to 144 (LGPI…SVPI), 150 to 170 (ILYG…AIFL), 202 to 222 (TVVG…LFYS), 232 to 252 (IAVP…GFFG), and 277 to 297 (MLDV…ILLI).

Belongs to the CDS family.

It localises to the cell membrane. It catalyses the reaction a 1,2-diacyl-sn-glycero-3-phosphate + CTP + H(+) = a CDP-1,2-diacyl-sn-glycerol + diphosphate. The protein operates within phospholipid metabolism; CDP-diacylglycerol biosynthesis; CDP-diacylglycerol from sn-glycerol 3-phosphate: step 3/3. This is Phosphatidate cytidylyltransferase (cdsA) from Chlamydia trachomatis serovar D (strain ATCC VR-885 / DSM 19411 / UW-3/Cx).